Consider the following 370-residue polypeptide: Chaperone protein DnaJ (370 aa).

The J domain maps to 7-73 (DYYEILGVPR…QKRAMYDRFG (67 aa)). A CR-type zinc finger spans residues 144–226 (GTEIPIEYER…CGGSGRVLRR (83 aa)). Positions 157, 160, 174, 177, 200, 203, 214, and 217 each coordinate Zn(2+). CXXCXGXG motif repeat units lie at residues 157-164 (CPRCGGTG), 174-181 (CPRCGGTG), 200-207 (CDECGGTG), and 214-221 (CHECGGSG).

Belongs to the DnaJ family. As to quaternary structure, homodimer. Zn(2+) serves as cofactor.

It localises to the cytoplasm. Participates actively in the response to hyperosmotic and heat shock by preventing the aggregation of stress-denatured proteins and by disaggregating proteins, also in an autonomous, DnaK-independent fashion. Unfolded proteins bind initially to DnaJ; upon interaction with the DnaJ-bound protein, DnaK hydrolyzes its bound ATP, resulting in the formation of a stable complex. GrpE releases ADP from DnaK; ATP binding to DnaK triggers the release of the substrate protein, thus completing the reaction cycle. Several rounds of ATP-dependent interactions between DnaJ, DnaK and GrpE are required for fully efficient folding. Also involved, together with DnaK and GrpE, in the DNA replication of plasmids through activation of initiation proteins. The chain is Chaperone protein DnaJ from Thermotoga neapolitana (strain ATCC 49049 / DSM 4359 / NBRC 107923 / NS-E).